The following is a 330-amino-acid chain: Ribose operon repressor (330 aa).

Residues 2–56 (ATMKDVARLAGVSTSTVSHVINKDRFVSEAITAKVEAAIKELNYAPSALARSLKL) enclose the HTH lacI-type domain. A DNA-binding region (H-T-H motif) is located at residues 4 to 23 (MKDVARLAGVSTSTVSHVIN).

Functionally, transcriptional repressor for the ribose rbsDACBK operon. RbsR binds to a region of perfect dyad symmetry spanning the rbs operon transcriptional start site. The affinity for the rbs operator is reduced by addition of ribose, consistent with ribose being the inducer of the operon. The sequence is that of Ribose operon repressor (rbsR) from Escherichia coli O6:H1 (strain CFT073 / ATCC 700928 / UPEC).